We begin with the raw amino-acid sequence, 43 residues long: Protein PsbN (43 aa).

Residues Thr-5 to Phe-27 form a helical membrane-spanning segment.

It belongs to the PsbN family.

It localises to the plastid. The protein resides in the chloroplast thylakoid membrane. Functionally, may play a role in photosystem I and II biogenesis. This chain is Protein PsbN, found in Drimys granadensis.